Reading from the N-terminus, the 315-residue chain is MDGIIQIISAFIVIIEIIIGWFGNGFIVLVNCMHWIKRRRISTVNQILTALAFSRIYLLLTVFTVILASVQYSNILVTRREVKVIIFHLITSNHFSMWLAACLGLFYFLKIANFSNFIFVFLKKRVNKVVSGTLLMSLVFLFLNTLLINSYIDAQIDDYRGYLLYDFTSNITVSFYRVILVINNCIFTSIPFALSQSTFLMLIFSLWRHYKKMQQHAQRCRDTLTNAHIKVLQTMIMYVLLSAIFFLFLSMQIWRNKLMENILFIRFCETVAAVFPSGHSCVLIWGDTNLRQTFLSVLWWLKHRFTLWVPKLYCR.

At Met1–Ser9 the chain is on the extracellular side. The helical transmembrane segment at Ala10–Val30 threads the bilayer. Over Asn31 to Gln46 the chain is Cytoplasmic. The helical transmembrane segment at Ile47–Leu67 threads the bilayer. Over Ala68–Ala101 the chain is Extracellular. The chain crosses the membrane as a helical span at residues Cys102–Leu122. The Cytoplasmic portion of the chain corresponds to Lys123 to Lys128. The helical transmembrane segment at Val129–Asn149 threads the bilayer. Over Ser150 to Cys185 the chain is Extracellular. An N-linked (GlcNAc...) asparagine glycan is attached at Asn170. The chain crosses the membrane as a helical span at residues Ile186 to Leu206. Over Trp207–Gln233 the chain is Cytoplasmic. A helical membrane pass occupies residues Thr234–Trp254. The Extracellular portion of the chain corresponds to Arg255 to Arg266. Residues Phe267–Asp287 traverse the membrane as a helical segment. The Cytoplasmic segment spans residues Thr288–Arg315.

The protein belongs to the G-protein coupled receptor T2R family.

It localises to the membrane. In terms of biological role, putative taste receptor which may play a role in the perception of bitterness. This chain is Taste receptor type 2 member 129, found in Rattus norvegicus (Rat).